Reading from the N-terminus, the 177-residue chain is Small ribosomal subunit protein uS5 (177 aa).

The region spanning 21 to 84 (LKEKMISVNR…DEARRGMIKI (64 aa)) is the S5 DRBM domain.

The protein belongs to the universal ribosomal protein uS5 family. Part of the 30S ribosomal subunit. Contacts proteins S4 and S8.

Functionally, with S4 and S12 plays an important role in translational accuracy. Located at the back of the 30S subunit body where it stabilizes the conformation of the head with respect to the body. This chain is Small ribosomal subunit protein uS5, found in Nitrosomonas eutropha (strain DSM 101675 / C91 / Nm57).